The sequence spans 276 residues: Short-chain dehydrogenase anuF (276 aa).

NADP(+)-binding residues include Ile18, Asp68, Lys130, Tyr176, Lys180, Val209, and Thr211. Tyr176 serves as the catalytic Proton acceptor. Tyr176 (proton donor) is an active-site residue. Lys180 acts as the Lowers pKa of active site Tyr in catalysis.

The protein belongs to the short-chain dehydrogenases/reductases (SDR) family.

The enzyme catalyses (2R,9S)-annullatin H + A = (2R)-annullatin F + AH2. In terms of biological role, cytochrome P450 monooxygenase; part of the gene cluster that mediates the biosynthesis of annullatin D, an alkylated aromatic polyketide with a fused dihydrobenzofuran lactone ring system that exhibits potent agonistic activities toward the cannabinoid receptors. Within the pathway, anuF is involved in the formation of (2R)-annullatin F from the diastereomer of (2S,9S)-annullatin H (compound 12). The annullatin backbone 2-hydroxymethyl-3-pentylphenol is assembled from one acetyl-CoA starter unit and 5 malonyl-CoA elongation units by cooperation of the highly reducing polyketide synthase anuA, the short-chain dehydrogenase anuB and the oxidoreductase anuC, before being hydroxylated at the C-5 alkyl chain by the cytochrome P450 monooxygenase anuE to form (8S)-annullatin E. The prenyltransferase anuH subsequently installs one isoprenyl group at the benzene ring to form (8S)-annullatin J. Enzymatic or nonenzymatic dihydro-benzofuran ring formation between the prenyl and the phenolic hydroxyl groups in (8S)-annullatin J results in two diastereomers (2S,9S)-annullatin H and compound 12. The intermediate (2S,9S)-annullatin H is then converted to (2S,9S)-annullatin D by the FAD-linked oxidoreductase anuG-catalyzed five-member lactone ring formation. The isomer 12 acts as a substrate for the short-chain dehydrogenase anuF and is oxidized to (2R)-annullatin F, which is subsequently acetylated by an acetyltransferase leading to (2R)-annullatin G formation. The remaining enzymes identified within the cluster, anuD, anuI and anuJ, seem not to be involved in annullatin biosynthesis. In Penicillium roqueforti (strain FM164), this protein is Short-chain dehydrogenase anuF.